We begin with the raw amino-acid sequence, 79 residues long: MSFEVFEKLEAKVQQAIDTITLLQMEIEELKEQNGSLNHQVQQASGNSEALVRENQQLKEEQHVWQERLRALLGKMEEV.

Residues 4–78 (EVFEKLEAKV…LRALLGKMEE (75 aa)) are a coiled coil.

The protein belongs to the ZapB family. As to quaternary structure, homodimer. The ends of the coiled-coil dimer bind to each other, forming polymers. Interacts with FtsZ.

The protein resides in the cytoplasm. Its function is as follows. Non-essential, abundant cell division factor that is required for proper Z-ring formation. It is recruited early to the divisome by direct interaction with FtsZ, stimulating Z-ring assembly and thereby promoting cell division earlier in the cell cycle. Its recruitment to the Z-ring requires functional FtsA or ZipA. The sequence is that of Cell division protein ZapB from Erwinia tasmaniensis (strain DSM 17950 / CFBP 7177 / CIP 109463 / NCPPB 4357 / Et1/99).